We begin with the raw amino-acid sequence, 377 residues long: Glutamate 5-kinase (377 aa).

Lys20 is an ATP binding site. The substrate site is built by Ser60, Asp147, and Asn159. Residue 179–180 (TD) coordinates ATP. Residues 285-363 (AGRLVIDDGA…DKVYQVLGEA (79 aa)) form the PUA domain.

Belongs to the glutamate 5-kinase family.

Its subcellular location is the cytoplasm. It catalyses the reaction L-glutamate + ATP = L-glutamyl 5-phosphate + ADP. The protein operates within amino-acid biosynthesis; L-proline biosynthesis; L-glutamate 5-semialdehyde from L-glutamate: step 1/2. Its function is as follows. Catalyzes the transfer of a phosphate group to glutamate to form L-glutamate 5-phosphate. The sequence is that of Glutamate 5-kinase from Acinetobacter baumannii (strain SDF).